The primary structure comprises 394 residues: Cytohesin-4 (394 aa).

The stretch at 12-65 (SSGETEELQRIKWHRKQLLEDIQKLKDEIADVFAQIDCFESAEESRMAQKEKEL) forms a coiled coil. Residues 54–241 (EESRMAQKEK…RNLFDSIKSE (188 aa)) enclose the SEC7 domain. Residues 259-375 (NPDREGWLLK…WIESIRASIT (117 aa)) enclose the PH domain. Residues 268–275 (KLGGRVKT), Arg-279, Tyr-290, and Arg-300 contribute to the a 1,2-diacyl-sn-glycero-3-phospho-(1D-myo-inositol-3,4,5-trisphosphate) site. Residues 386 to 394 (RKKKIASKQ) form a C-terminal autoinhibitory region region.

In terms of tissue distribution, expressed predominantly in peripheral blood leukocytes.

It localises to the cell membrane. Functionally, promotes guanine-nucleotide exchange on ARF1 and ARF5. Promotes the activation of ARF factors through replacement of GDP with GTP. The polypeptide is Cytohesin-4 (CYTH4) (Homo sapiens (Human)).